The sequence spans 584 residues: 2-isopropylmalate synthase (584 aa).

Positions 45–323 constitute a Pyruvate carboxyltransferase domain; that stretch reads PRWLSTDLRD…SPNLDFSKLD (279 aa). Asp-54, His-262, His-264, and Asn-298 together coordinate a divalent metal cation.

The protein belongs to the alpha-IPM synthase/homocitrate synthase family. LeuA type 2 subfamily. In terms of assembly, homodimer. It depends on a divalent metal cation as a cofactor.

The catalysed reaction is 3-methyl-2-oxobutanoate + acetyl-CoA + H2O = (2S)-2-isopropylmalate + CoA + H(+). It functions in the pathway amino-acid biosynthesis; L-leucine biosynthesis; L-leucine from 3-methyl-2-oxobutanoate: step 1/4. Catalyzes the condensation of the acetyl group of acetyl-CoA with 3-methyl-2-oxobutanoate (2-oxoisovalerate) to form 3-carboxy-3-hydroxy-4-methylpentanoate (2-isopropylmalate). The protein is 2-isopropylmalate synthase (leu3) of Schizosaccharomyces pombe (strain 972 / ATCC 24843) (Fission yeast).